Reading from the N-terminus, the 182-residue chain is Glycerol-3-phosphate acyltransferase 1 (182 aa).

The next 5 helical transmembrane spans lie at 5–25 (MQFL…AYIV), 54–74 (GYFI…VAVA), 81–101 (PTFV…PVLF), 117–137 (IAFD…FYLI), and 157–177 (ILYS…VLIL).

It belongs to the PlsY family. As to quaternary structure, probably interacts with PlsX.

Its subcellular location is the cell membrane. It carries out the reaction an acyl phosphate + sn-glycerol 3-phosphate = a 1-acyl-sn-glycero-3-phosphate + phosphate. The protein operates within lipid metabolism; phospholipid metabolism. Catalyzes the transfer of an acyl group from acyl-phosphate (acyl-PO(4)) to glycerol-3-phosphate (G3P) to form lysophosphatidic acid (LPA). This enzyme utilizes acyl-phosphate as fatty acyl donor, but not acyl-CoA or acyl-ACP. In Bacillus cereus (strain ATCC 14579 / DSM 31 / CCUG 7414 / JCM 2152 / NBRC 15305 / NCIMB 9373 / NCTC 2599 / NRRL B-3711), this protein is Glycerol-3-phosphate acyltransferase 1.